The chain runs to 535 residues: Glucans biosynthesis protein D 1 (535 aa).

A signal peptide (tat-type signal) is located at residues 1-28 (MHRRDLLKQLAAGFLALAPGLTPSTASA). The segment at 275-287 (RTDRAGDRQSAAR) is insert.

This sequence belongs to the OpgD/OpgG family. In terms of processing, predicted to be exported by the Tat system. The position of the signal peptide cleavage has not been experimentally proven.

The protein resides in the periplasm. It participates in glycan metabolism; osmoregulated periplasmic glucan (OPG) biosynthesis. Its function is as follows. Probably involved in the control of the structural glucose backbone of osmoregulated periplasmic glucans (OPGs). In Ralstonia nicotianae (strain ATCC BAA-1114 / GMI1000) (Ralstonia solanacearum), this protein is Glucans biosynthesis protein D 1 (opgD1).